A 289-amino-acid polypeptide reads, in one-letter code: Borealin (289 aa).

The segment at 1 to 58 is required for interaction with INCENP; sequence MAPKKRSSRGTRTNTLRSRKLASFLKDFDREVQVRTKQIESDRQTLLKEVENLYNIEI. Positions 1–88 are required for centromere localization; the sequence is MAPKKRSSRG…NKQALEEAAK (88 aa). The tract at residues 1–150 is required for interaction with SENP3; it reads MAPKKRSSRG…KKSHKNLRSA (150 aa). The segment at 10–109 is required to form a minimal CPC core complex that localizes to the central spindle and midbody and properly executes the role of the CPC during cytokinesis; sequence GTRTNTLRSR…TAEAIQTPLK (100 aa). Residues 20-78 form a required for interaction with INCENP and BIRC5 region; it reads KLASFLKDFDREVQVRTKQIESDRQTLLKEVENLYNIEILRLPKALQGMKWLDYFALGG. Arginine 91 is modified (citrulline). At threonine 94 the chain carries Phosphothreonine; by TTK. Threonine 106 bears the Phosphothreonine mark. Serine 110 carries the phosphoserine modification. The segment at 122–173 is disordered; the sequence is SIKEEEEEEEEGGGGGGRTKKSHKNLRSAKVKRCLPSKKRTQSIQGRGRSKR. Over residues 123 to 133 the composition is skewed to acidic residues; it reads IKEEEEEEEEG. Residues 139–162 show a composition bias toward basic residues; that stretch reads RTKKSHKNLRSAKVKRCLPSKKRT. Residue lysine 145 forms a Glycyl lysine isopeptide (Lys-Gly) (interchain with G-Cter in SUMO2) linkage. At serine 175 the chain carries Phosphoserine. Residues threonine 198 and threonine 213 each carry the phosphothreonine modification. 4 positions are modified to phosphoserine: serine 228, serine 233, serine 247, and serine 253.

This sequence belongs to the borealin family. In terms of assembly, may form homooligomers and homodimers. Component of the chromosomal passenger complex (CPC) composed of at least BIRC5/survivin, CDCA8/borealin, INCENP, AURKB or AURKC; in the complex forms a triple-helix bundle-based subcomplex with INCENP and BIRC5. Interacts with SENP3, UBE2I and RANBP2. Interacts (phosphorylated) with SGO1 and SGO2A; the association is dependent on CDK1. In terms of processing, phosphorylated by TTK, essentially at Thr-94. Phosphorylation (probably by CDK1) promotes targeting of the CPC to centromeric DNA. Sumoylated by UBE2I and RANBP2. Desumoylated by SENP3 through the removal of SUMO2 and SUMO3. Post-translationally, citrullinated by PADI4.

It is found in the nucleus. Its subcellular location is the nucleolus. The protein localises to the cytoplasm. The protein resides in the chromosome. It localises to the centromere. It is found in the cytoskeleton. Its subcellular location is the spindle. Functionally, component of the chromosomal passenger complex (CPC), a complex that acts as a key regulator of mitosis. The CPC complex has essential functions at the centromere in ensuring correct chromosome alignment and segregation and is required for chromatin-induced microtubule stabilization and spindle assembly. In the complex, it may be required to direct the CPC to centromeric DNA. Major effector of the TTK kinase in the control of attachment-error-correction and chromosome alignment. The protein is Borealin (Cdca8) of Mus musculus (Mouse).